The chain runs to 685 residues: MNKGWLELESDPGLFTLLVEDFGVKGVQVEEIYDLQSKCPGPVYGFIFLFKWIEERRSRRKVSTLLDDTSVMEDEVVNNMFFAHQLIPNSCATHALLSVLLNCSGVHLGPTLSRIKEFTKGFSPESKGYAIGNAPELAKAHNSHARPEPRHLPEKQNGISAVRTMEAFHFVSYVPIKGRLFELDGLKVYPIDHGPWAEDEEWTDKARRVIMERIGLATAGEPYHDIRFNLMAVVPDRRLKYESKLHILKMNRQTVLEALQQLIRVTQPELIQAQKPTEGQSTEETKSAALKAPVSQESHRAHHGSHRNATDVGAEPPGALIRGPVMSAYSKPNSLAQNGGTVAAPASRLPAFLDNHNYAKSPMQEEEDLAAGVGRSRGVPPPAPDTDEEEEEETENVRRPLTPPGFKRRSSEPLPPPPGPEPGVLAEKLKETQRDLCSPLSIKTGAPTAPHSQPSPTPSNESTDTASEIGSAFNSPLRSPLRSANPTRPSSPVTLHLSKVLFGEEEPLLRLDCVRYNRAVRELGPHISTGILHLSKDGYLCPLSRLETGKVSPKGNKVEEPRESSEPDTERSRVTEVPQGEKFSPKELLALLKCVEAEISSSEACLREELEKRKKFKIDDQRRTHNYDEFICAFISMLAQEGMLASLVEQNISVRRRQGVSIGRLHKQRKPDRRKRSRPYKAKRQ.

A UCH catalytic domain is found at 4-235 (GWLELESDPG…IRFNLMAVVP (232 aa)). Cys91 (nucleophile) is an active-site residue. The Proton donor role is filled by His169. 4 disordered regions span residues 273–325 (AQKP…RGPV), 363–425 (MQEE…PGVL), 440–493 (LSIK…SSPV), and 550–579 (KVSP…EVPQ). A compositionally biased stretch (acidic residues) spans 385 to 394 (DTDEEEEEET). A compositionally biased stretch (polar residues) spans 450–493 (PHSQPSPTPSNESTDTASEIGSAFNSPLRSPLRSANPTRPSSPV). Positions 556–574 (NKVEEPRESSEPDTERSRV) are enriched in basic and acidic residues. Residues 626–654 (NYDEFICAFISMLAQEGMLASLVEQNISV) enclose the ULD domain. The segment at 659–685 (GVSIGRLHKQRKPDRRKRSRPYKAKRQ) is disordered. The Nuclear localization signal signature appears at 673–678 (RRKRSR).

The protein belongs to the peptidase C12 family. BAP1 subfamily. Component of the PR-DUB complex.

It is found in the cytoplasm. The protein localises to the nucleus. The catalysed reaction is Thiol-dependent hydrolysis of ester, thioester, amide, peptide and isopeptide bonds formed by the C-terminal Gly of ubiquitin (a 76-residue protein attached to proteins as an intracellular targeting signal).. Functionally, deubiquitinating enzyme that plays a key role in chromatin by mediating deubiquitination of histone H2A. Catalytic component of the PR-DUB complex, a complex that specifically mediates deubiquitination of histone H2A monoubiquitinated at 'Lys-119' (H2AK119ub1). This chain is Ubiquitin carboxyl-terminal hydrolase BAP1 (bap1), found in Xenopus tropicalis (Western clawed frog).